Consider the following 208-residue polypeptide: Outer-membrane lipoprotein carrier protein (208 aa).

The N-terminal stretch at 1–25 (MKKRFSAKLFSALVLSISFFSAANA) is a signal peptide.

Belongs to the LolA family. Monomer.

The protein localises to the periplasm. In terms of biological role, participates in the translocation of lipoproteins from the inner membrane to the outer membrane. Only forms a complex with a lipoprotein if the residue after the N-terminal Cys is not an aspartate (The Asp acts as a targeting signal to indicate that the lipoprotein should stay in the inner membrane). This is Outer-membrane lipoprotein carrier protein from Vibrio parahaemolyticus serotype O3:K6 (strain RIMD 2210633).